The following is a 160-amino-acid chain: Protein-export protein SecB (160 aa).

It belongs to the SecB family. Homotetramer, a dimer of dimers. One homotetramer interacts with 1 SecA dimer.

The protein resides in the cytoplasm. Functionally, one of the proteins required for the normal export of preproteins out of the cell cytoplasm. It is a molecular chaperone that binds to a subset of precursor proteins, maintaining them in a translocation-competent state. It also specifically binds to its receptor SecA. This Beijerinckia indica subsp. indica (strain ATCC 9039 / DSM 1715 / NCIMB 8712) protein is Protein-export protein SecB.